The chain runs to 380 residues: High affinity transport system protein p37 (380 aa).

Positions 1–26 (MLKRKKLLQGFLKFLPLIIPATIFVS) are cleaved as a signal peptide. Residue Cys-27 is the site of N-palmitoyl cysteine attachment. Cys-27 is lipidated: S-diacylglycerol cysteine. The segment at 285–304 (NHFYTPTENNGKGDSEKSNN) is disordered.

It is found in the cell membrane. In terms of biological role, P37 is part of a high-affinity transport system. This is High affinity transport system protein p37 (p37) from Mycoplasma pneumoniae (strain ATCC 29342 / M129 / Subtype 1) (Mycoplasmoides pneumoniae).